A 184-amino-acid polypeptide reads, in one-letter code: ATP synthase subunit b, chloroplastic (184 aa).

A helical transmembrane segment spans residues 27 to 49; it reads LATNPINLSVVLGVLIFFGKGVL.

The protein belongs to the ATPase B chain family. In terms of assembly, F-type ATPases have 2 components, F(1) - the catalytic core - and F(0) - the membrane proton channel. F(1) has five subunits: alpha(3), beta(3), gamma(1), delta(1), epsilon(1). F(0) has four main subunits: a(1), b(1), b'(1) and c(10-14). The alpha and beta chains form an alternating ring which encloses part of the gamma chain. F(1) is attached to F(0) by a central stalk formed by the gamma and epsilon chains, while a peripheral stalk is formed by the delta, b and b' chains.

It is found in the plastid. Its subcellular location is the chloroplast thylakoid membrane. Its function is as follows. F(1)F(0) ATP synthase produces ATP from ADP in the presence of a proton or sodium gradient. F-type ATPases consist of two structural domains, F(1) containing the extramembraneous catalytic core and F(0) containing the membrane proton channel, linked together by a central stalk and a peripheral stalk. During catalysis, ATP synthesis in the catalytic domain of F(1) is coupled via a rotary mechanism of the central stalk subunits to proton translocation. Component of the F(0) channel, it forms part of the peripheral stalk, linking F(1) to F(0). The sequence is that of ATP synthase subunit b, chloroplastic from Gossypium barbadense (Sea Island cotton).